Consider the following 248-residue polypeptide: DNA repair protein RecO (248 aa).

This sequence belongs to the RecO family.

In terms of biological role, involved in DNA repair and RecF pathway recombination. This is DNA repair protein RecO from Chelativorans sp. (strain BNC1).